A 255-amino-acid chain; its full sequence is Putative cysteine-rich repeat secretory protein 13 (255 aa).

A signal peptide spans 1-21 (MSSNILAMVAMQLLLIRIVSS). Gnk2-homologous domains are found at residues 28-136 (YLNH…SVNT) and 142-252 (YDSF…LYPF).

The protein belongs to the cysteine-rich repeat secretory protein family.

The protein localises to the secreted. This is Putative cysteine-rich repeat secretory protein 13 (CRRSP13) from Arabidopsis thaliana (Mouse-ear cress).